The chain runs to 101 residues: NADH-quinone oxidoreductase subunit K (101 aa).

Helical transmembrane passes span 2–22 (ISLN…LVGV), 29–49 (IMLF…LVAI), and 63–83 (MFII…LILW).

The protein belongs to the complex I subunit 4L family. As to quaternary structure, NDH-1 is composed of 14 different subunits. Subunits NuoA, H, J, K, L, M, N constitute the membrane sector of the complex.

It localises to the cell inner membrane. It catalyses the reaction a quinone + NADH + 5 H(+)(in) = a quinol + NAD(+) + 4 H(+)(out). NDH-1 shuttles electrons from NADH, via FMN and iron-sulfur (Fe-S) centers, to quinones in the respiratory chain. The immediate electron acceptor for the enzyme in this species is believed to be ubiquinone. Couples the redox reaction to proton translocation (for every two electrons transferred, four hydrogen ions are translocated across the cytoplasmic membrane), and thus conserves the redox energy in a proton gradient. This Campylobacter hominis (strain ATCC BAA-381 / DSM 21671 / CCUG 45161 / LMG 19568 / NCTC 13146 / CH001A) protein is NADH-quinone oxidoreductase subunit K.